The following is a 100-amino-acid chain: Defensin-6 (100 aa).

The N-terminal stretch at 1–19 (MRTLTILTAVLLVALQAKA) is a signal peptide. The propeptide occupies 20 to 68 (EPLQAEDEPLQAKAYEADAQEQRGANDQDFAVSFAEDASSSLRALGSTR). 3 disulfides stabilise this stretch: cysteine 72–cysteine 99, cysteine 74–cysteine 88, and cysteine 78–cysteine 98.

This sequence belongs to the alpha-defensin family. As to quaternary structure, homodimer. Self-assembles into higher-order oligomers termed nanonets, fibril-like structures that entrap microbes. Self-assembly into nanonets seems to protect against proteolytic digestion in duodenal fluid. Interacts with Y.enterocolitica invasin and S.typhimurium fliC/flagellim; the interaction creates an anchoring site for progressive DEFA6 self-assembly into nanonets. Post-translationally, proteolytically cleaved by trypsin at Arg-68; the propeptide is stored in the tissue of the small intestine and the mature peptide is found in the luminal fluid; cleavage may occur during or after release into the lumen. The N-terminal propeptide region suppresses self-assembly and renders DEFA6 propeptide unable to agglutinate bacteria and protect human epithelial cells from bacterial invasion. In terms of processing, under reducing conditions, naturally present in the gut owing to the low redox potential or enzymatically generated by the thioredoxin system, the disulfide bridges are opened leading to a conformational change of DEF6, thereby changing its antimicrobial spectrum. The reduced form exhibits inhibitory activity against anaerobic bacteria, in contrast to the minimal antimicrobial activity of the disulfide-linked oxidized form. The formation of higher-order nanonets and bacterial entrapment is independent of the redox state.

The protein resides in the secreted. It is found in the cytoplasmic vesicle. Its subcellular location is the secretory vesicle. In terms of biological role, host-defense peptide that contributes to intestinal innate immunity and mediates homeostasis at mucosal surfaces by forming higher-order oligomers that capture bacteria and prevent microbial invasion of the epithelium. After binding to bacterial surface proteins, undergoes ordered self-assembly to form fibril-like nanonets that surround and entangle bacteria and thereby prevent bacterial invasion across the epithelial barrier. Entangles and agglutinates Gram-negative bacteria, such as E.coli, S.typhimurium and Y.enterocolitica, and Gram-positive bacteria such as L.monocytogenes, thereby protecting the intestine against invasion by enteric bacterial pathogens. Blocks adhesion of C.albicans to intestinal epithelial cells and thereby suppresses fungal invasion of epithelial cells and biofilm formation. Under reducing conditions and in an acidic environment similar to the intestinal milieu, exhibits inhibitory activity against anaerobic bacteria such as B.adolescentis, L.acidophilus, and B.breve, as well as B.longum and S.thermophilus, possibly by leading to alterations in bacterial cell envelope structures. The disulfide-linked oxidized form exhibits negligible antimicrobial activity against Gram-negative and Gram-positive bacteria, as compared to the enteric defensin DEFA5. The protein is Defensin-6 (DEFA6) of Pan troglodytes (Chimpanzee).